Here is a 525-residue protein sequence, read N- to C-terminus: FNIP repeat-containing protein DDB_G0274617 (525 aa).

The stretch at 65-107 (YQHEIKKEMLPSSIISIIFYNIKNILSSDSIPDTVKFLGFNGY) is one FNIP repeat.

This is FNIP repeat-containing protein DDB_G0274617 from Dictyostelium discoideum (Social amoeba).